Here is a 218-residue protein sequence, read N- to C-terminus: LexA repressor (218 aa).

A DNA-binding region (H-T-H motif) is located at residues 28-48 (RAEIAAEFGFSSPNAAEEHLR). Residues S136 and K173 each act as for autocatalytic cleavage activity in the active site.

This sequence belongs to the peptidase S24 family. Homodimer.

The catalysed reaction is Hydrolysis of Ala-|-Gly bond in repressor LexA.. Represses a number of genes involved in the response to DNA damage (SOS response), including recA and lexA. In the presence of single-stranded DNA, RecA interacts with LexA causing an autocatalytic cleavage which disrupts the DNA-binding part of LexA, leading to derepression of the SOS regulon and eventually DNA repair. The protein is LexA repressor of Cupriavidus pinatubonensis (strain JMP 134 / LMG 1197) (Cupriavidus necator (strain JMP 134)).